Consider the following 134-residue polypeptide: Profilin (134 aa).

The protein belongs to the profilin family. As to quaternary structure, occurs in many kinds of cells as a complex with monomeric actin in a 1:1 ratio.

The protein resides in the cytoplasm. It is found in the cytoskeleton. Binds to actin and affects the structure of the cytoskeleton. At high concentrations, profilin prevents the polymerization of actin, whereas it enhances it at low concentrations. By binding to PIP2, it inhibits the formation of IP3 and DG. This is Profilin from Apium graveolens (Celery).